We begin with the raw amino-acid sequence, 313 residues long: DNA-directed RNA polymerase subunit alpha (313 aa).

The tract at residues 1–226 (MLEIEKPKIE…EHLQLFVNLN (226 aa)) is alpha N-terminal domain (alpha-NTD). The segment at 243 to 313 (KEKLAEMPIE…MGLSLRKEEE (71 aa)) is alpha C-terminal domain (alpha-CTD).

The protein belongs to the RNA polymerase alpha chain family. As to quaternary structure, homodimer. The RNAP catalytic core consists of 2 alpha, 1 beta, 1 beta' and 1 omega subunit. When a sigma factor is associated with the core the holoenzyme is formed, which can initiate transcription.

The catalysed reaction is RNA(n) + a ribonucleoside 5'-triphosphate = RNA(n+1) + diphosphate. DNA-dependent RNA polymerase catalyzes the transcription of DNA into RNA using the four ribonucleoside triphosphates as substrates. This Carboxydothermus hydrogenoformans (strain ATCC BAA-161 / DSM 6008 / Z-2901) protein is DNA-directed RNA polymerase subunit alpha.